The chain runs to 554 residues: Glutamine--tRNA ligase (554 aa).

The 'HIGH' region motif lies at 34–44 (PEPNGYLHIGH). ATP contacts are provided by residues 35–37 (EPN) and 41–47 (HIGHAKS). 2 residues coordinate L-glutamine: Asp67 and Tyr212. ATP is bound by residues Thr231, 261 to 262 (RL), and 269 to 271 (MSK). Residues 268–272 (VMSKR) carry the 'KMSKS' region motif. An interaction with tRNA region spans residues 317–324 (TKQDNTIE).

It belongs to the class-I aminoacyl-tRNA synthetase family. In terms of assembly, monomer.

The protein localises to the cytoplasm. It carries out the reaction tRNA(Gln) + L-glutamine + ATP = L-glutaminyl-tRNA(Gln) + AMP + diphosphate. The chain is Glutamine--tRNA ligase from Escherichia coli O7:K1 (strain IAI39 / ExPEC).